The following is a 518-amino-acid chain: Forkhead box protein H1 (518 aa).

Residues 72–113 form a disordered region; that stretch reads GSMYGLSPGTHEGSCTHTHEGPKDSMAGDQTRSRKSKKKNYH. Over residues 104 to 113 the composition is skewed to basic residues; it reads SRKSKKKNYH. The fork-head DNA-binding region spans 117–213; sequence KPPYSYLAMI…MKLQNTALTR (97 aa). A disordered region spans residues 318-397; the sequence is KPTRNARSPG…NYSPIEPPKK (80 aa). The segment covering 329-346 has biased composition (low complexity); sequence STIHSTYSSSSSSISTIS. The SMAD-interaction domain (SID) stretch occupies residues 380–506; it reads TSSDPDTGNY…PSFLSQCLGS (127 aa). A Fast/FoxH1 motif 1 (FM1) motif is present at residues 405–409; that stretch reads LPTSY. The Fast/FoxH1 motif 2 (FM2) signature appears at 415-421; that stretch reads PNVVAPP. An SMAD interaction motif (SIM) motif is present at residues 470–491; the sequence is LDNMLRAMPPNKSVFDVLTSHP.

As to quaternary structure, ARF1 contains 2 smad2s, 1 smad4 and 1 foxh1/fast-1 protein. Interaction with smad4 is most likely indirect through interaction with the MH2 domain of smad2. Binds to the MH2 domain of smad3, which can incorporate into the ARF1 complex. The ARF1 and ARF2 complexes are activated by distinct TGF-beta family members; formation of ARF1 is promoted by activin. Interacts (via Fork-head domain) with gtf2ird1/wbscr11 (via repeats 4-5). As to expression, highly expressed in the animal cap (prospective ectoderm) and prospective mesoderm of stage 10.25 embryos.

The protein localises to the nucleus. Its function is as follows. Transcriptional activator. Recognizes and binds to the DNA sequence 5'-TGT[GT][GT]ATT-3'. Upon TGF-beta induction, forms a transcriptionally active complex with smad2 and smad4 called activin-responsive factor 1 (ARF1), which binds a site on the mix-B/mix.2 promoter called the activin response element (ARE). Binds to activated smads and the ARE with much lower affinity than fast3. Necessary for the first steps in mesoderm specification, directly inducing mesodermal genes. Acts with fast3 to control the convergent extension movements of gastrulation. Binds to the proximal element (PE) of the gsc gene and cooperates with gtf2ird1/wbscr11 and SMAD proteins to regulate gsc transcription. This Xenopus laevis (African clawed frog) protein is Forkhead box protein H1 (foxh1).